A 459-amino-acid chain; its full sequence is Phosphoglucosamine mutase (459 aa).

The Phosphoserine intermediate role is filled by Ser105. Positions 105, 252, 254, and 256 each coordinate Mg(2+). Ser105 carries the post-translational modification Phosphoserine.

This sequence belongs to the phosphohexose mutase family. Mg(2+) is required as a cofactor. In terms of processing, activated by phosphorylation.

It catalyses the reaction alpha-D-glucosamine 1-phosphate = D-glucosamine 6-phosphate. In terms of biological role, catalyzes the conversion of glucosamine-6-phosphate to glucosamine-1-phosphate. This is Phosphoglucosamine mutase from Bifidobacterium adolescentis (strain ATCC 15703 / DSM 20083 / NCTC 11814 / E194a).